A 183-amino-acid chain; its full sequence is Peptidyl-prolyl cis-trans isomerase 11 (183 aa).

The PPIase cyclophilin-type domain maps to 20–182 (FLEVTAGGAP…LPIVVVQCGQ (163 aa)).

This sequence belongs to the cyclophilin-type PPIase family. PPIase H subfamily.

It carries out the reaction [protein]-peptidylproline (omega=180) = [protein]-peptidylproline (omega=0). In terms of biological role, PPIases accelerate the folding of proteins. It catalyzes the cis-trans isomerization of proline imidic peptide bonds in oligopeptides. This chain is Peptidyl-prolyl cis-trans isomerase 11 (cyn-11), found in Caenorhabditis elegans.